The sequence spans 407 residues: Lysosome-associated membrane glycoprotein 1 (407 aa).

Residues 1–21 (MAAPGARRPLLLLLLAGLAHS) form the signal peptide. The first lumenal domain stretch occupies residues 22 to 189 (APALFEVKDN…SKEETRCPQD (168 aa)). Residues 22 to 371 (APALFEVKDN…VEECVQDGNN (350 aa)) lie on the Lumenal side of the membrane. Residues asparagine 32, asparagine 59, asparagine 71, asparagine 79, asparagine 102, asparagine 116, asparagine 125, asparagine 145, asparagine 160, and asparagine 178 are each glycosylated (N-linked (GlcNAc...) asparagine). An intrachain disulfide couples cysteine 36 to cysteine 75. Cysteine 150 and cysteine 186 are disulfide-bonded. The tract at residues 180–211 (SKEETRCPQDQPSPTTGPPSPSPPLVPTNPSV) is disordered. Residues 190–219 (QPSPTTGPPSPSPPLVPTNPSVSKYNVTGD) form a hinge region. Pro residues predominate over residues 194–206 (TTGPPSPSPPLVP). N-linked (GlcNAc...) asparagine glycans are attached at residues asparagine 215, asparagine 220, asparagine 233, asparagine 241, asparagine 271, asparagine 283, asparagine 297, and asparagine 312. Residues 220–371 (NGTCLLASMA…VEECVQDGNN (152 aa)) are second lumenal domain. The cysteines at positions 223 and 260 are disulfide-linked. A disulfide bridge links cysteine 328 with cysteine 365. A helical membrane pass occupies residues 372–395 (MLIPIAVGGALAGLVLIVLIAYLI). Topologically, residues 396 to 407 (GRKRSHAGYQTI) are cytoplasmic.

This sequence belongs to the LAMP family. Interacts with ABCB9; this interaction strongly stabilizes ABCB9 and protects ABCB9 against lysosomal degradation. Interacts with FURIN. Interacts with TMEM175; inhibiting the proton channel activity of TMEM175. O- and N-glycosylated; some of the N-glycans attached to LAMP-1 are polylactosaminoglycans.

It localises to the lysosome membrane. It is found in the endosome membrane. The protein resides in the late endosome membrane. The protein localises to the cell membrane. Its subcellular location is the cytolytic granule membrane. Lysosomal membrane glycoprotein which plays an important role in lysosome biogenesis, lysosomal pH regulation, autophagy and cholesterol homeostasis. Acts as an important regulator of lysosomal lumen pH regulation by acting as a direct inhibitor of the proton channel TMEM175, facilitating lysosomal acidification for optimal hydrolase activity. Also plays an important role in NK-cells cytotoxicity. Mechanistically, participates in cytotoxic granule movement to the cell surface and perforin trafficking to the lytic granule. In addition, protects NK-cells from degranulation-associated damage induced by their own cytotoxic granule content. Presents carbohydrate ligands to selectins. The polypeptide is Lysosome-associated membrane glycoprotein 1 (Lamp1) (Rattus norvegicus (Rat)).